Here is a 466-residue protein sequence, read N- to C-terminus: Glutamate--tRNA ligase (466 aa).

A 'HIGH' region motif is present at residues Pro-10–Gly-20. The 'KMSKS' region motif lies at Arg-237–Arg-241. Lys-240 is a binding site for ATP.

It belongs to the class-I aminoacyl-tRNA synthetase family. Glutamate--tRNA ligase type 1 subfamily. As to quaternary structure, monomer.

It is found in the cytoplasm. It catalyses the reaction tRNA(Glu) + L-glutamate + ATP = L-glutamyl-tRNA(Glu) + AMP + diphosphate. Its function is as follows. Catalyzes the attachment of glutamate to tRNA(Glu) in a two-step reaction: glutamate is first activated by ATP to form Glu-AMP and then transferred to the acceptor end of tRNA(Glu). This Syntrophotalea carbinolica (strain DSM 2380 / NBRC 103641 / GraBd1) (Pelobacter carbinolicus) protein is Glutamate--tRNA ligase.